The sequence spans 474 residues: Lipoprotein lipase (474 aa).

The signal sequence occupies residues 1-27; the sequence is MESKALLLVALGVWLQSLTAFRGGVAA. The interval 32 to 53 is interaction with GPIHBP1; sequence RDFSDIESKFALRTPEDTAEDT. An intrachain disulfide couples Cys54 to Cys67. An N-linked (GlcNAc...) asparagine glycan is attached at Asn70. Tyr121 carries the 3'-nitrotyrosine modification. The Nucleophile role is filled by Ser159. Asp183 (charge relay system) is an active-site residue. Residue Tyr191 is modified to 3'-nitrotyrosine. Residues Ala194, Arg197, Ser199, and Asp202 each contribute to the Ca(2+) site. Cys243 and Cys266 are joined by a disulfide. The tract at residues 243-266 is essential for determining substrate specificity; that stretch reads CNIGEAIRVIAEKGLGDVDQLVKC. His268 (charge relay system) is an active-site residue. 2 disulfides stabilise this stretch: Cys291-Cys310 and Cys302-Cys305. The PLAT domain maps to 341–464; sequence FHYQVKIHFS…KGKDAAVFVK (124 aa). A 3'-nitrotyrosine modification is found at Tyr343. Asn386 carries N-linked (GlcNAc...) asparagine glycosylation. Residues 417–421 form an important for interaction with lipoprotein particles region; the sequence is WSDWW. The tract at residues 430–434 is important for heparin binding; that stretch reads KIRVK. The interaction with GPIHBP1 stretch occupies residues 443–467; it reads IFCAREKVSHLQKGKDAAVFVKCHD. Cys445 and Cys465 are disulfide-bonded.

This sequence belongs to the AB hydrolase superfamily. Lipase family. Homodimer. Interacts with GPIHBP1 with 1:1 stoichiometry. Interacts with APOC2; the interaction activates LPL activity in the presence of lipids. Interaction with heparan sulfate proteoglycans is required to protect LPL against loss of activity. Associates with lipoprotein particles in blood plasma. Interacts with LMF1 and SEL1L; interaction with SEL1L is required to prevent aggregation of newly synthesized LPL in the endoplasmic reticulum (ER), and for normal export of LPL from the ER to the extracellular space. Interacts with SORL1; SORL1 acts as a sorting receptor, promoting LPL localization to endosomes and later to lysosomes, leading to degradation of newly synthesized LPL. In terms of processing, tyrosine nitration after lipopolysaccharide (LPS) challenge down-regulates the lipase activity.

Its subcellular location is the cell membrane. The protein resides in the secreted. It is found in the extracellular space. It localises to the extracellular matrix. The enzyme catalyses a triacylglycerol + H2O = a diacylglycerol + a fatty acid + H(+). It catalyses the reaction a 1,2-diacyl-sn-glycero-3-phosphocholine + H2O = a 2-acyl-sn-glycero-3-phosphocholine + a fatty acid + H(+). It carries out the reaction 1,2,3-tri-(9Z-octadecenoyl)-glycerol + H2O = di-(9Z)-octadecenoylglycerol + (9Z)-octadecenoate + H(+). The catalysed reaction is 1,2-di-(9Z-octadecenoyl)-sn-glycero-3-phosphocholine + H2O = (9Z-octadecenoyl)-sn-glycero-3-phosphocholine + (9Z)-octadecenoate + H(+). The enzyme catalyses 1,2,3-tributanoylglycerol + H2O = dibutanoylglycerol + butanoate + H(+). It catalyses the reaction 1,2-dihexadecanoyl-sn-glycero-3-phosphocholine + H2O = hexadecanoyl-sn-glycero-3-phosphocholine + hexadecanoate + H(+). Its activity is regulated as follows. The apolipoprotein APOC2 acts as a coactivator of LPL activity. Ca(2+) binding promotes protein stability and formation of the active homodimer. Interaction with GPIHBP1 protects LPL against inactivation by ANGPTL4. Its function is as follows. Key enzyme in triglyceride metabolism. Catalyzes the hydrolysis of triglycerides from circulating chylomicrons and very low density lipoproteins (VLDL), and thereby plays an important role in lipid clearance from the blood stream, lipid utilization and storage. Although it has both phospholipase and triglyceride lipase activities it is primarily a triglyceride lipase with low but detectable phospholipase activity. Mediates margination of triglyceride-rich lipoprotein particles in capillaries. Recruited to its site of action on the luminal surface of vascular endothelium by binding to GPIHBP1 and cell surface heparan sulfate proteoglycans. The sequence is that of Lipoprotein lipase (Lpl) from Rattus norvegicus (Rat).